The sequence spans 287 residues: NAD kinase (287 aa).

Residue D70 is the Proton acceptor of the active site. Residues D70–G71, N144–D145, R155, K172, D174, T185–S190, and Q244 contribute to the NAD(+) site.

Belongs to the NAD kinase family. A divalent metal cation is required as a cofactor.

It localises to the cytoplasm. The catalysed reaction is NAD(+) + ATP = ADP + NADP(+) + H(+). Functionally, involved in the regulation of the intracellular balance of NAD and NADP, and is a key enzyme in the biosynthesis of NADP. Catalyzes specifically the phosphorylation on 2'-hydroxyl of the adenosine moiety of NAD to yield NADP. The protein is NAD kinase of Solibacter usitatus (strain Ellin6076).